Consider the following 127-residue polypeptide: MFSTLLAVFIGGGVGSVARWQLGVKFNSLYPTLPLGTLLANLIGAFVIGGALAFFLRHPHLDQDWKILITTGLCGGLTTFSTFSAEVVMFLQSGQLAAAGLHVLLNLAGSLLMTALAFALVTWVTTH.

4 consecutive transmembrane segments (helical) span residues 4 to 24 (TLLA…QLGV), 35 to 55 (LGTL…LAFF), 71 to 91 (TGLC…VMFL), and 103 to 123 (VLLN…LVTW). Positions 75 and 78 each coordinate Na(+).

This sequence belongs to the fluoride channel Fluc/FEX (TC 1.A.43) family.

The protein localises to the cell inner membrane. It catalyses the reaction fluoride(in) = fluoride(out). Na(+) is not transported, but it plays an essential structural role and its presence is essential for fluoride channel function. In terms of biological role, fluoride-specific ion channel. Important for reducing fluoride concentration in the cell, thus reducing its toxicity. The protein is Fluoride-specific ion channel FluC of Pectobacterium atrosepticum (strain SCRI 1043 / ATCC BAA-672) (Erwinia carotovora subsp. atroseptica).